A 254-amino-acid polypeptide reads, in one-letter code: GPI alpha-1,4-mannosyltransferase I, stabilizing subunit (254 aa).

A signal peptide spans Met-1–Ala-22. The Lumenal portion of the chain corresponds to Asp-23 to Leu-226. Asn-211 is a glycosylation site (N-linked (GlcNAc...) asparagine). Residues Val-227–Phe-247 traverse the membrane as a helical segment. The Cytoplasmic segment spans residues Lys-248 to Leu-254.

The protein belongs to the PIGX family. In terms of assembly, part of the glycosylphosphatidylinositol-mannosyltransferase I complex that is composed of PIGM and PIGX. Interacts with PIGM; PIGX stabilizes PIGM.

It localises to the endoplasmic reticulum membrane. It participates in glycolipid biosynthesis; glycosylphosphatidylinositol-anchor biosynthesis. In terms of biological role, stabilizing subunit of the glycosylphosphatidylinositol-mannosyltransferase I complex which catalyzes the transfer of the first mannose, via an alpha-1,4 bond from a dolichol-phosphate-mannose (Dol-P-Man) to the glucosaminyl acyl phosphatidylinositol (GlcN-(acyl)PI) intermediate to generate alpha-D-Man-(1-&gt;4)-alpha-D-GlcN-(1-&gt;6)-(1-radyl,2-acyl-sn-glycero-3-phospho)-2-acyl-inositol and participates in the sixth step of the glycosylphosphatidylinositol-anchor biosynthesis. Probably acts by stabilizing the mannosyltransferase PIGM. The polypeptide is GPI alpha-1,4-mannosyltransferase I, stabilizing subunit (Mus musculus (Mouse)).